The following is a 338-amino-acid chain: Protein REG2 (338 aa).

The disordered stretch occupies residues 1 to 21 (MTLSNCDSLDNLFQDPPEEEE).

Its function is as follows. Regulatory subunit, binds to type-1 protein phosphatase. Functions with HEX2/REG1 and SNF1 protein kinase to regulate growth. Might regulate SNF1 directly or indirectly. This Saccharomyces cerevisiae (strain ATCC 204508 / S288c) (Baker's yeast) protein is Protein REG2 (REG2).